A 283-amino-acid polypeptide reads, in one-letter code: Acetylglutamate kinase (283 aa).

Substrate-binding positions include 63 to 64 (GG), R85, and N179.

It belongs to the acetylglutamate kinase family. ArgB subfamily.

Its subcellular location is the cytoplasm. The enzyme catalyses N-acetyl-L-glutamate + ATP = N-acetyl-L-glutamyl 5-phosphate + ADP. Its pathway is amino-acid biosynthesis; L-arginine biosynthesis; N(2)-acetyl-L-ornithine from L-glutamate: step 2/4. In terms of biological role, catalyzes the ATP-dependent phosphorylation of N-acetyl-L-glutamate. The sequence is that of Acetylglutamate kinase from Clostridium kluyveri (strain NBRC 12016).